The chain runs to 630 residues: 1-deoxy-D-xylulose-5-phosphate synthase (630 aa).

Thiamine diphosphate contacts are provided by residues His-80 and 121 to 123 (GHS). Asp-152 lines the Mg(2+) pocket. Thiamine diphosphate contacts are provided by residues 153–154 (GA), Asn-181, Tyr-288, and Glu-370. Asn-181 contacts Mg(2+).

Belongs to the transketolase family. DXPS subfamily. Homodimer. It depends on Mg(2+) as a cofactor. Thiamine diphosphate is required as a cofactor.

The catalysed reaction is D-glyceraldehyde 3-phosphate + pyruvate + H(+) = 1-deoxy-D-xylulose 5-phosphate + CO2. The protein operates within metabolic intermediate biosynthesis; 1-deoxy-D-xylulose 5-phosphate biosynthesis; 1-deoxy-D-xylulose 5-phosphate from D-glyceraldehyde 3-phosphate and pyruvate: step 1/1. Functionally, catalyzes the acyloin condensation reaction between C atoms 2 and 3 of pyruvate and glyceraldehyde 3-phosphate to yield 1-deoxy-D-xylulose-5-phosphate (DXP). The protein is 1-deoxy-D-xylulose-5-phosphate synthase of Colwellia psychrerythraea (strain 34H / ATCC BAA-681) (Vibrio psychroerythus).